Here is a 615-residue protein sequence, read N- to C-terminus: 1-deoxy-D-xylulose-5-phosphate synthase (615 aa).

Thiamine diphosphate is bound by residues H72 and G113 to A115. A Mg(2+)-binding site is contributed by D144. Residues G145–A146, N173, Y281, and E360 each bind thiamine diphosphate. Residue N173 participates in Mg(2+) binding.

Belongs to the transketolase family. DXPS subfamily. In terms of assembly, homodimer. Requires Mg(2+) as cofactor. Thiamine diphosphate is required as a cofactor.

The enzyme catalyses D-glyceraldehyde 3-phosphate + pyruvate + H(+) = 1-deoxy-D-xylulose 5-phosphate + CO2. It participates in metabolic intermediate biosynthesis; 1-deoxy-D-xylulose 5-phosphate biosynthesis; 1-deoxy-D-xylulose 5-phosphate from D-glyceraldehyde 3-phosphate and pyruvate: step 1/1. Functionally, catalyzes the acyloin condensation reaction between C atoms 2 and 3 of pyruvate and glyceraldehyde 3-phosphate to yield 1-deoxy-D-xylulose-5-phosphate (DXP). This is 1-deoxy-D-xylulose-5-phosphate synthase from Thermus thermophilus (strain ATCC 27634 / DSM 579 / HB8).